The sequence spans 268 residues: Small ribosomal subunit protein mS43 (268 aa).

Residues 1 to 23 (MLNTGLRKGLALSPITHLLKRCS) constitute a mitochondrion transit peptide.

This sequence belongs to the mitochondrion-specific ribosomal protein mS43 family. Component of the mitochondrial small ribosomal subunit (mt-SSU). Mature yeast 74S mitochondrial ribosomes consist of a small (37S) and a large (54S) subunit. The 37S small subunit contains a 15S ribosomal RNA (15S mt-rRNA) and at least 32 different proteins. The 54S large subunit contains a 21S rRNA (21S mt-rRNA) and at least 45 different proteins. mS43 forms a dimer with mS42, building a large protuberance adjacent to the mRNA channel exit in the mt-SSU body.

The protein resides in the mitochondrion. Functionally, component of the mitochondrial ribosome (mitoribosome), a dedicated translation machinery responsible for the synthesis of mitochondrial genome-encoded proteins, including at least some of the essential transmembrane subunits of the mitochondrial respiratory chain. The mitoribosomes are attached to the mitochondrial inner membrane and translation products are cotranslationally integrated into the membrane. In Schizosaccharomyces pombe (strain 972 / ATCC 24843) (Fission yeast), this protein is Small ribosomal subunit protein mS43.